Reading from the N-terminus, the 902-residue chain is Probable leucine--tRNA ligase, mitochondrial (902 aa).

An N6-acetyllysine modification is found at K67. The 'HIGH' region motif lies at 91–101 (YPSGKLHMGHV). K235 carries the post-translational modification N6-acetyllysine. Positions 638–642 (KMSKS) match the 'KMSKS' region motif. Position 641 (K641) interacts with ATP.

It belongs to the class-I aminoacyl-tRNA synthetase family.

It is found in the mitochondrion matrix. It carries out the reaction tRNA(Leu) + L-leucine + ATP = L-leucyl-tRNA(Leu) + AMP + diphosphate. The chain is Probable leucine--tRNA ligase, mitochondrial (Lars2) from Mus musculus (Mouse).